A 144-amino-acid chain; its full sequence is 3-hydroxyacyl-[acyl-carrier-protein] dehydratase FabZ (144 aa).

His-48 is a catalytic residue.

The protein belongs to the thioester dehydratase family. FabZ subfamily.

The protein resides in the cytoplasm. The catalysed reaction is a (3R)-hydroxyacyl-[ACP] = a (2E)-enoyl-[ACP] + H2O. Functionally, involved in unsaturated fatty acids biosynthesis. Catalyzes the dehydration of short chain beta-hydroxyacyl-ACPs and long chain saturated and unsaturated beta-hydroxyacyl-ACPs. This chain is 3-hydroxyacyl-[acyl-carrier-protein] dehydratase FabZ, found in Bacillus cytotoxicus (strain DSM 22905 / CIP 110041 / 391-98 / NVH 391-98).